The chain runs to 678 residues: NADPH--cytochrome P450 reductase (678 aa).

N-acetylglycine is present on G2. Topologically, residues 2-22 are lumenal; that stretch reads GDSNVDTGTTTSEMVAEEVSL. A helical transmembrane segment spans residues 23 to 43; it reads FSATDMVLFSLIVGLLTYWFI. The Cytoplasmic segment spans residues 44-678; that stretch reads FRKKKDEVPE…KGRYSLDVWS (635 aa). The residue at position 63 (S63) is a Phosphoserine. A Flavodoxin-like domain is found at 80-224; the sequence is IIVFYGSQTG…DFITWREQFW (145 aa). FMN-binding positions include 86–91, 138–141, 173–182, and D208; these read SQTGTA, ATYG, and LGNKTYEHFN. An FAD-binding FR-type domain is found at 279–521; sequence KNPFLAVVTT…FVRKSQFRLP (243 aa). R298 contacts NADP(+). Residues R424, 454-457, 472-474, Y478, and 488-491 each bind FAD; these read RYYS, CAV, and GVAT. NADP(+) is bound by residues T535, 596–597, 602–606, and D639; these read SR and KVYVQ. W677 serves as a coordination point for FAD.

It belongs to the NADPH--cytochrome P450 reductase family. This sequence in the N-terminal section; belongs to the flavodoxin family. The protein in the C-terminal section; belongs to the flavoprotein pyridine nucleotide cytochrome reductase family. It depends on FAD as a cofactor. FMN is required as a cofactor.

It localises to the endoplasmic reticulum membrane. The enzyme catalyses 2 oxidized [cytochrome P450] + NADPH = 2 reduced [cytochrome P450] + NADP(+) + H(+). This enzyme is required for electron transfer from NADP to cytochrome P450 in microsomes. It can also provide electron transfer to heme oxygenase and cytochrome B5. The protein is NADPH--cytochrome P450 reductase of Sus scrofa (Pig).